A 139-amino-acid polypeptide reads, in one-letter code: D-ribose pyranase (139 aa).

Catalysis depends on His-20, which acts as the Proton donor. Residues Asp-28, His-106, and 128-130 (YAN) contribute to the substrate site.

It belongs to the RbsD / FucU family. RbsD subfamily. In terms of assembly, homodecamer.

It is found in the cytoplasm. It carries out the reaction beta-D-ribopyranose = beta-D-ribofuranose. The protein operates within carbohydrate metabolism; D-ribose degradation; D-ribose 5-phosphate from beta-D-ribopyranose: step 1/2. Functionally, catalyzes the interconversion of beta-pyran and beta-furan forms of D-ribose. The sequence is that of D-ribose pyranase from Escherichia coli (strain 55989 / EAEC).